Here is a 62-residue protein sequence, read N- to C-terminus: Sec-independent protein translocase protein TatA (62 aa).

A helical transmembrane segment spans residues 1–21 (MFGIGIPELLVIFVLILLVFG).

Belongs to the TatA/E family. In terms of assembly, the Tat system comprises two distinct complexes: a TatABC complex, containing multiple copies of TatA, TatB and TatC subunits, and a separate TatA complex, containing only TatA subunits. Substrates initially bind to the TatABC complex, which probably triggers association of the separate TatA complex to form the active translocon.

It is found in the cell inner membrane. Functionally, part of the twin-arginine translocation (Tat) system that transports large folded proteins containing a characteristic twin-arginine motif in their signal peptide across membranes. TatA could form the protein-conducting channel of the Tat system. The protein is Sec-independent protein translocase protein TatA of Oleidesulfovibrio alaskensis (strain ATCC BAA-1058 / DSM 17464 / G20) (Desulfovibrio alaskensis).